Here is a 1516-residue protein sequence, read N- to C-terminus: EF-hand calcium-binding domain-containing protein 6 (1516 aa).

Residues 1–23 are disordered; sequence MKRNGTRLNFAKANSTKSGSTRA. The segment covering 12 to 21 has biased composition (polar residues); the sequence is KANSTKSGST. EF-hand domains are found at residues 96–131, 197–232, 321–356, 444–462, and 528–563; these read SRRDDIKKVFQILDRNHNQMVTKGDLKRVITAFLIP, RNMRSIRKVFQVMDVNNTGLVQPQELRRVLETFCLR, KSYEKIEKALSAGDPSKGGYISLNYLKVVLDTFIYR, SGHITWEELRHILNCMVAK, and RNLQAFYSMLQSYDLRDTGTIGKNNFRKVMRVFCPY. Ca(2+)-binding residues include Asp-109, Asn-111, Asn-113, Met-115, Asp-120, Asp-210, Asn-212, Thr-214, and Glu-221. Positions 618-638 are disordered; sequence EEPGQQDERTQPSGEKTSEIN. Residues 628–638 show a composition bias toward polar residues; sequence QPSGEKTSEIN. EF-hand domains lie at 674–690, 763–798, 905–940, 1086–1121, 1193–1228, and 1229–1264; these read KINQEEFRKVLERSGMP, ESFRDVYSAFFRIDLDRDGIISMHDFHRLLQYLQLN, LTPREFEKLWQNYDTEGRGYITYQEFLHRLGIRYSP, SSQPALVEAFSALDKEDTGFVKAMEFGDVLRSVCQK, SHYHTIVQEFENFDTLKSNTVSRDEFRSICTRHIQI, and LTDEQFDRLWSELPVNAKGRLKYQDFLSKLSIERVP. Residues Asp-776, Asp-778, Asp-780, and Asp-787 each coordinate Ca(2+). Residue Thr-906 is modified to Phosphothreonine. Residues 1263–1318 form a disordered region; the sequence is VPSPPMAAGDSGESTMAQRGSSAPEFSQGTRSNLYSPPRDSRVGLKSRSHPCTPVG. Ser-1265 carries the phosphoserine modification. The segment covering 1274–1297 has biased composition (polar residues); it reads GESTMAQRGSSAPEFSQGTRSNLY. Residue Ser-1311 is modified to Phosphoserine. 2 positions are modified to phosphothreonine: Thr-1315 and Thr-1319. Residues 1318 to 1516 are interaction with PARK7; it reads GTPPLQNCEP…YNDFLRAFLQ (199 aa). EF-hand domains are found at residues 1348–1373, 1374–1409, 1454–1484, and 1485–1516; these read KEKDTDKQGTISAAEFLALVEKFKLD, ISREESQQLIVKYDLKNNGKFAYCDFIQSCVLLLKA, MRRSFKTYDKNGTGLLSVADFRKVLRQYSIN, and LSEEEFFHVLEYYDKSLSSKISYNDFLRAFLQ. The segment at 1422-1516 is interaction with AR; that stretch reads NADKMKEAGM…YNDFLRAFLQ (95 aa). Asp-1462, Asn-1464, Thr-1466, and Asp-1473 together coordinate Ca(2+).

As to quaternary structure, microtubule inner protein component of sperm flagellar doublet microtubules. Binds PARK7. Part of a ternary complex containing PARK7, EFCAB6/DJBP and AR.

The protein localises to the nucleus. It localises to the cytoplasm. It is found in the cytoskeleton. Its subcellular location is the flagellum axoneme. Negatively regulates the androgen receptor by recruiting histone deacetylase complex, and protein DJ-1 antagonizes this inhibition by abrogation of this complex. Microtubule inner protein (MIP) part of the dynein-decorated doublet microtubules (DMTs) in cilia axoneme, which is required for motile cilia beating. In Mus musculus (Mouse), this protein is EF-hand calcium-binding domain-containing protein 6 (Efcab6).